The primary structure comprises 252 residues: MKIVISPAKSLNFEKELPTSQYTEPSFLKEARVVHKVVKTKKPSELSELMSISDKLADLNWKRNQDWKTPFTPENARPAVYTFDGDVYTGLDAYSIPLEKLDALQDKLRILSGLYGLLKPLDLMQAYRLEMGTKMPVGESKNLHEFWKPTVTKALNKELKKDELFVNLASNEYFSAVDVKALKVPVITPDFKDYKDGKLKMISFFAKKARGMMVRYIIDTNAETIDDLKGFNYEGYKFDANLSKGNHLVFTR.

This sequence belongs to the UPF0246 family.

In Flavobacterium johnsoniae (strain ATCC 17061 / DSM 2064 / JCM 8514 / BCRC 14874 / CCUG 350202 / NBRC 14942 / NCIMB 11054 / UW101) (Cytophaga johnsonae), this protein is UPF0246 protein Fjoh_4905.